A 250-amino-acid polypeptide reads, in one-letter code: Testis-expressed protein 101 (250 aa).

Residues 1 to 25 form the signal peptide; that stretch reads MGACRIQYILLVFLLIASHWTLVQN. N-linked (GlcNAc...) asparagine glycosylation is found at N45, N110, N134, and N160. The UPAR/Ly6 domain occupies 141-215; sequence CPTCLALEPC…VKETCSYQSF (75 aa). G224 is lipidated: GPI-anchor amidated glycine. A propeptide spans 225–250 (removed in mature form); that stretch reads ASWMPTSLWVLELLLPALSLPLIYFP.

In terms of assembly, interacts with VAMP3. Interacts with LY6K. Interacts with DPEP3; co-localized on the cell surface of spermatocytes, spermatids, and testicular spermatozoa, co-localized only in cytoplasmic droplets of caput and corpus epididymal sperm. Interacts with ADAM5. N-glycosylated; by high mannose and/or biantennary complex and/or certain types of hybrid oligosaccharides; possesses different oligosaccharides chains according to its subcellular localization in the testis. In terms of processing, sheds from membrane raft by ACE and released from the cell surface of epididymal sperm while it passes through the caput epididymis leading to disappearance of TEX101 on spermatozoa; is essential to produce fertile spermatozoa. In terms of tissue distribution, detected in testis.

The protein resides in the cell membrane. It localises to the membrane raft. The protein localises to the cytoplasmic vesicle. It is found in the secretory vesicle. Its subcellular location is the acrosome. The protein resides in the secreted. Functionally, plays a role in fertilization by controlling binding of sperm to zona pellucida and migration of spermatozoa into the oviduct. May play a role in signal transduction and promote protein tyrosine phosphorylation. The protein is Testis-expressed protein 101 of Rattus norvegicus (Rat).